A 526-amino-acid chain; its full sequence is Exodeoxyribonuclease 7 large subunit (526 aa).

The segment at 497–526 (AMTTEGGTPPGGAKKRSTKPAEPTKQGSLF) is disordered.

This sequence belongs to the XseA family. As to quaternary structure, heterooligomer composed of large and small subunits.

Its subcellular location is the cytoplasm. It carries out the reaction Exonucleolytic cleavage in either 5'- to 3'- or 3'- to 5'-direction to yield nucleoside 5'-phosphates.. In terms of biological role, bidirectionally degrades single-stranded DNA into large acid-insoluble oligonucleotides, which are then degraded further into small acid-soluble oligonucleotides. This Rhizobium etli (strain ATCC 51251 / DSM 11541 / JCM 21823 / NBRC 15573 / CFN 42) protein is Exodeoxyribonuclease 7 large subunit.